We begin with the raw amino-acid sequence, 190 residues long: dCTP deaminase (190 aa).

DCTP is bound at residue 113 to 118; it reads KSTYAR. E139 functions as the Proton donor/acceptor in the catalytic mechanism. Residues Q158, Y172, K181, and Q182 each coordinate dCTP.

The protein belongs to the dCTP deaminase family. In terms of assembly, homotrimer.

It carries out the reaction dCTP + H2O + H(+) = dUTP + NH4(+). The protein operates within pyrimidine metabolism; dUMP biosynthesis; dUMP from dCTP (dUTP route): step 1/2. In terms of biological role, catalyzes the deamination of dCTP to dUTP. The chain is dCTP deaminase from Chlamydia pneumoniae (Chlamydophila pneumoniae).